The chain runs to 52 residues: uncharacterized protein (52 aa).

This is an uncharacterized protein from Escherichia coli.